We begin with the raw amino-acid sequence, 325 residues long: uncharacterized protein (325 aa).

Residues Met-1–Gln-75 are disordered. Residues Tyr-24–Tyr-70 show a composition bias toward pro residues. 4 helical membrane-spanning segments follow: residues Ala-96–Ala-116, Ile-153–Ile-173, Leu-205–Phe-225, and Leu-273–Ile-293.

It to M.tuberculosis Rv2560.

Its subcellular location is the cell membrane. This is an uncharacterized protein from Mycobacterium bovis (strain ATCC BAA-935 / AF2122/97).